A 689-amino-acid chain; its full sequence is Elongation factor G (689 aa).

The tr-type G domain maps to 8–282 (LNTRNIGIMA…AVVDYLPSPI (275 aa)). Residues 17–24 (AHIDAGKT), 81–85 (DTPGH), and 135–138 (NKMD) each bind GTP.

It belongs to the TRAFAC class translation factor GTPase superfamily. Classic translation factor GTPase family. EF-G/EF-2 subfamily.

It localises to the cytoplasm. Functionally, catalyzes the GTP-dependent ribosomal translocation step during translation elongation. During this step, the ribosome changes from the pre-translocational (PRE) to the post-translocational (POST) state as the newly formed A-site-bound peptidyl-tRNA and P-site-bound deacylated tRNA move to the P and E sites, respectively. Catalyzes the coordinated movement of the two tRNA molecules, the mRNA and conformational changes in the ribosome. The protein is Elongation factor G of Mycoplasma capricolum subsp. capricolum (strain California kid / ATCC 27343 / NCTC 10154).